The primary structure comprises 201 residues: Small ribosomal subunit protein uS4c (201 aa).

The 61-residue stretch at 89 to 149 (MRLDNILFRL…DKPKSGALIK (61 aa)) folds into the S4 RNA-binding domain.

It belongs to the universal ribosomal protein uS4 family. As to quaternary structure, part of the 30S ribosomal subunit. Contacts protein S5. The interaction surface between S4 and S5 is involved in control of translational fidelity.

Its subcellular location is the plastid. In terms of biological role, one of the primary rRNA binding proteins, it binds directly to 16S rRNA where it nucleates assembly of the body of the 30S subunit. With S5 and S12 plays an important role in translational accuracy. The protein is Small ribosomal subunit protein uS4c (rps4) of Cuscuta reflexa (Southern Asian dodder).